The following is a 361-amino-acid chain: uncharacterized protein (361 aa).

An N-terminal signal peptide occupies residues 1–28; the sequence is MSKSKFTKIIVVICIAAMFITGTSILSF.

This is an uncharacterized protein from Ruminiclostridium cellulolyticum (strain ATCC 35319 / DSM 5812 / JCM 6584 / H10) (Clostridium cellulolyticum).